The sequence spans 449 residues: Tubulin alpha-2B chain (449 aa).

Q11 contacts GTP. K40 bears the N6-acetyllysine mark. 7 residues coordinate GTP: E71, S140, G144, T145, T179, N206, and N228. E71 contributes to the Mg(2+) binding site. Residue E254 is part of the active site.

This sequence belongs to the tubulin family. In terms of assembly, dimer of alpha and beta chains. A typical microtubule is a hollow water-filled tube with an outer diameter of 25 nm and an inner diameter of 15 nM. Alpha-beta heterodimers associate head-to-tail to form protofilaments running lengthwise along the microtubule wall with the beta-tubulin subunit facing the microtubule plus end conferring a structural polarity. Microtubules usually have 13 protofilaments but different protofilament numbers can be found in some organisms and specialized cells. Requires Mg(2+) as cofactor. Acetylation of alpha chains at Lys-40 stabilizes microtubules and affects affinity and processivity of microtubule motors. This modification has a role in multiple cellular functions, ranging from cell motility, cell cycle progression or cell differentiation to intracellular trafficking and signaling.

It is found in the cytoplasm. The protein localises to the cytoskeleton. The protein resides in the spindle. It localises to the nucleus. The enzyme catalyses GTP + H2O = GDP + phosphate + H(+). In terms of biological role, tubulin is the major constituent of microtubules, a cylinder consisting of laterally associated linear protofilaments composed of alpha- and beta-tubulin heterodimers. Microtubules grow by the addition of GTP-tubulin dimers to the microtubule end, where a stabilizing cap forms. Below the cap, tubulin dimers are in GDP-bound state, owing to GTPase activity of alpha-tubulin. The sequence is that of Tubulin alpha-2B chain (ALTBE) from Physarum polycephalum (Slime mold).